Here is a 67-residue protein sequence, read N- to C-terminus: Large ribosomal subunit protein bL31 (67 aa).

Zn(2+) contacts are provided by C16, C18, C36, and C39.

This sequence belongs to the bacterial ribosomal protein bL31 family. Type A subfamily. As to quaternary structure, part of the 50S ribosomal subunit. Zn(2+) is required as a cofactor.

Functionally, binds the 23S rRNA. The polypeptide is Large ribosomal subunit protein bL31 (Treponema pallidum (strain Nichols)).